The sequence spans 266 residues: Mitochondrial S-adenosylmethionine carrier protein (266 aa).

3 Solcar repeats span residues 4–77, 85–167, and 176–264; these read RELC…AKRF, LSPI…LKNL, and VDCW…VRSS. 6 helical membrane passes run 5-25, 49-69, 84-104, 141-161, 181-201, and 237-257; these read ELCA…LILF, IYAG…AFFV, YLSP…ACLI, RGYK…FPLW, SAVC…PLDV, and FAGV…FLGA.

Belongs to the mitochondrial carrier (TC 2.A.29) family.

It is found in the mitochondrion inner membrane. The catalysed reaction is S-adenosyl-L-homocysteine(out) + S-adenosyl-L-methionine(in) = S-adenosyl-L-homocysteine(in) + S-adenosyl-L-methionine(out). In terms of biological role, mitochondrial S-adenosyl-L-methionine/S-adenosyl-L-homocysteine antiporter. Mediates the exchange of cytosolic S-adenosyl-L-methionine, the predominant methyl-group donor for macromolecule methylation processes, for mitochondrial S-adenosylhomocysteine(SAH), a by-product of methylation reactions. In Xenopus laevis (African clawed frog), this protein is Mitochondrial S-adenosylmethionine carrier protein (slc25a26).